The primary structure comprises 349 residues: Serine/threonine-protein kinase SRK2A (349 aa).

Residues 12–268 (YELVKDIGSG…IQEIKNHEWF (257 aa)) enclose the Protein kinase domain. ATP is bound by residues 18 to 26 (IGSGNFGVA) and Lys-41. Residue Asp-131 is the Proton acceptor of the active site. The activation loop stretch occupies residues 151-177 (DFGYSKSSLLHSQPKSTVGTPAYIAPE).

The protein belongs to the protein kinase superfamily. Ser/Thr protein kinase family.

The enzyme catalyses L-seryl-[protein] + ATP = O-phospho-L-seryl-[protein] + ADP + H(+). It carries out the reaction L-threonyl-[protein] + ATP = O-phospho-L-threonyl-[protein] + ADP + H(+). Its activity is regulated as follows. Activated by osmotic stress and by abscisic acid (ABA). Activation by NaCl is dependent on ABA. Functionally, involved in early responses to osmotic stress. The chain is Serine/threonine-protein kinase SRK2A from Physcomitrium patens (Spreading-leaved earth moss).